Here is a 361-residue protein sequence, read N- to C-terminus: N-methyltransferase benX (361 aa).

Belongs to the methyltransferase superfamily.

It functions in the pathway secondary metabolite biosynthesis. Functionally, N-methyltransferase; part of the gene cluster that mediates the biosynthesis of benzomalvin A and D. The pathway begins with the loading of amino acid precursors onto the A domains of the non ribosomal peptide synthetases benY and benZ. BenY and the A1 domain of benZ are loaded with anthranilate (Anth), while the A2 domain of benZ is loaded with phenylalanine (Phe). N-methylation of Phe by the methyltransferase benX may happen before loading of Phe onto benZ, after loading of Phe, or after dipeptide formation. Condensation of Anth with the secondary amine of NmPhe or Phe is catalyzed by the C1 domain of benZ, forming a dipeptide intermediate. This is followed by in trans condensation of the Anth-NmPhe dipeptide with Anth bound to the T domain of benY by the C2 domain of benZ to form the linear tripeptide Anth-NmPhe-Anth. Cyclization and release of the tripeptide is then catalyzed by the C-terminal C domain of benY and the resulting 11-member macrocyclic intermediate is expected to spontaneously collapse to form the benzodiazepine core. Benzomalvin A is in conformational equilibrium with its atropisomer, benzomalvin D. The protein is N-methyltransferase benX of Aspergillus terreus.